The sequence spans 309 residues: Porphobilinogen deaminase (309 aa).

The residue at position 241 (cysteine 241) is an S-(dipyrrolylmethanemethyl)cysteine.

Belongs to the HMBS family. In terms of assembly, monomer. Dipyrromethane serves as cofactor.

It catalyses the reaction 4 porphobilinogen + H2O = hydroxymethylbilane + 4 NH4(+). Its pathway is porphyrin-containing compound metabolism; protoporphyrin-IX biosynthesis; coproporphyrinogen-III from 5-aminolevulinate: step 2/4. Its function is as follows. Tetrapolymerization of the monopyrrole PBG into the hydroxymethylbilane pre-uroporphyrinogen in several discrete steps. This chain is Porphobilinogen deaminase, found in Bacillus cereus (strain B4264).